The primary structure comprises 460 residues: Probable protein phosphatase 2C 38 (460 aa).

Disordered stretches follow at residues 1–30 (MVAV…AVPS) and 83–111 (RPMR…GRIA). Residues 100–109 (PRDREPRDGR) show a composition bias toward basic and acidic residues. The 315-residue stretch at 118–432 (AASLYTMRGN…DDCAVVCLFL (315 aa)) folds into the PPM-type phosphatase domain. Mn(2+)-binding residues include aspartate 154 and glycine 155. Positions 192-219 (VTSSMTEGGGTERMDRDTETPLGTEENG) are disordered. The span at 201–210 (GTERMDRDTE) shows a compositional bias: basic and acidic residues. Mn(2+)-binding residues include aspartate 377 and aspartate 423.

This sequence belongs to the PP2C family. The cofactor is Mg(2+). Requires Mn(2+) as cofactor.

The enzyme catalyses O-phospho-L-seryl-[protein] + H2O = L-seryl-[protein] + phosphate. It catalyses the reaction O-phospho-L-threonyl-[protein] + H2O = L-threonyl-[protein] + phosphate. The chain is Probable protein phosphatase 2C 38 from Oryza sativa subsp. japonica (Rice).